Here is a 92-residue protein sequence, read N- to C-terminus: Small ribosomal subunit protein uS19 (92 aa).

It belongs to the universal ribosomal protein uS19 family.

In terms of biological role, protein S19 forms a complex with S13 that binds strongly to the 16S ribosomal RNA. The sequence is that of Small ribosomal subunit protein uS19 from Borreliella afzelii (strain PKo) (Borrelia afzelii).